We begin with the raw amino-acid sequence, 139 residues long: Phosphoribosyl-AMP cyclohydrolase (139 aa).

Aspartate 95 serves as a coordination point for Mg(2+). Cysteine 96 contributes to the Zn(2+) binding site. Mg(2+) is bound by residues aspartate 97 and aspartate 99. The Zn(2+) site is built by cysteine 114 and cysteine 121.

The protein belongs to the PRA-CH family. As to quaternary structure, homodimer. Requires Mg(2+) as cofactor. Zn(2+) serves as cofactor.

It localises to the cytoplasm. The catalysed reaction is 1-(5-phospho-beta-D-ribosyl)-5'-AMP + H2O = 1-(5-phospho-beta-D-ribosyl)-5-[(5-phospho-beta-D-ribosylamino)methylideneamino]imidazole-4-carboxamide. Its pathway is amino-acid biosynthesis; L-histidine biosynthesis; L-histidine from 5-phospho-alpha-D-ribose 1-diphosphate: step 3/9. In terms of biological role, catalyzes the hydrolysis of the adenine ring of phosphoribosyl-AMP. This chain is Phosphoribosyl-AMP cyclohydrolase, found in Chelativorans sp. (strain BNC1).